We begin with the raw amino-acid sequence, 357 residues long: DNA replication and repair protein RecF (357 aa).

Residue 30-37 participates in ATP binding; it reads GANGSGKT.

It belongs to the RecF family.

Its subcellular location is the cytoplasm. The RecF protein is involved in DNA metabolism; it is required for DNA replication and normal SOS inducibility. RecF binds preferentially to single-stranded, linear DNA. It also seems to bind ATP. The sequence is that of DNA replication and repair protein RecF from Salmonella agona (strain SL483).